The primary structure comprises 298 residues: 2-dehydropantoate 2-reductase (298 aa).

NADP(+) contacts are provided by residues 7 to 12 (GGGSVG), Asn98, and Ala124. A substrate-binding site is contributed by Asn98. Lys179 serves as the catalytic Proton donor. Residues Asn183, Asn187, Asn197, and Ser246 each contribute to the substrate site. Glu258 contacts NADP(+).

It belongs to the ketopantoate reductase family.

Its subcellular location is the cytoplasm. It carries out the reaction (R)-pantoate + NADP(+) = 2-dehydropantoate + NADPH + H(+). Its pathway is cofactor biosynthesis; (R)-pantothenate biosynthesis; (R)-pantoate from 3-methyl-2-oxobutanoate: step 2/2. Functionally, catalyzes the NADPH-dependent reduction of ketopantoate into pantoic acid. The polypeptide is 2-dehydropantoate 2-reductase (panE) (Bacillus subtilis (strain 168)).